A 506-amino-acid polypeptide reads, in one-letter code: EPTC-inducible aldehyde dehydrogenase (506 aa).

Residue 219-225 coordinates NAD(+); sequence GFGVEAG. Catalysis depends on residues Glu263 and Cys302.

Belongs to the aldehyde dehydrogenase family.

The catalysed reaction is an aldehyde + NAD(+) + H2O = a carboxylate + NADH + 2 H(+). Functionally, degrades all aldehydes potentially generated by N dealkylation of thiocarbamates and may also participate in ethanolamine metabolism and further assimilation of degradation products by thiocarbamate-induced cytochrome P-450. The chain is EPTC-inducible aldehyde dehydrogenase (thcA) from Rhodococcus erythropolis (Arthrobacter picolinophilus).